A 188-amino-acid chain; its full sequence is UPF0461 protein C5orf24 (188 aa).

The span at 1–10 (MMHPVASSNP) shows a compositional bias: polar residues. The disordered stretch occupies residues 1 to 20 (MMHPVASSNPAFCGPGKPSC). Position 37 is a phosphoserine (Ser-37). A Glycyl lysine isopeptide (Lys-Gly) (interchain with G-Cter in SUMO2) cross-link involves residue Lys-75. The tract at residues 79–142 (KKKKNLNRSG…GYKVSPGRPP (64 aa)) is disordered. Residues 80–92 (KKKNLNRSGKRGR) show a composition bias toward basic residues. A compositionally biased stretch (polar residues) spans 94–107 (SGTTKSAGYRTSTG). 2 positions are modified to phosphoserine: Ser-121 and Ser-180. Residue Lys-184 forms a Glycyl lysine isopeptide (Lys-Gly) (interchain with G-Cter in SUMO2) linkage.

This sequence belongs to the UPF0461 family.

The sequence is that of UPF0461 protein C5orf24 (C5orf24) from Homo sapiens (Human).